The primary structure comprises 479 residues: GMP reductase (479 aa).

2 CBS domains span residues 96–153 and 154–212; these read VLDT…VRDI and AVTD…ATDS. NADP(+) is bound by residues 246–248 and 296–298; these read DTA and GVG. Residue cysteine 303 is the Thioimidate intermediate of the active site.

The protein belongs to the IMPDH/GMPR family. GuaB1 subfamily. A monovalent cation is required as a cofactor.

The catalysed reaction is IMP + NH4(+) + NADP(+) = GMP + NADPH + 2 H(+). It participates in purine metabolism; IMP biosynthesis via salvage pathway. Its function is as follows. Involved in the purine-salvage pathway. Catalyzes the NADPH-dependent conversion of GMP to IMP. This chain is GMP reductase, found in Mycobacterium bovis (strain ATCC BAA-935 / AF2122/97).